A 1111-amino-acid polypeptide reads, in one-letter code: MCLFLLLFPYLASGQFLQTVKVGLLFSKDTASVMRAVGYRTSAAAVLVARDRIRAEHLLDQYDFNFTVKFDECTEGLAGGKTVELINHDNVDVIIGPTCNRAGIAVASLAAYYNVPVFQWGLTTAADIGNVSRYPTTVTLSLDTHSMALGVREVLRRFEWDEFVFIYSNDGDEEKCASMKDDLEKMGIENSDVTLAYMVQIQTVTLDALQKALTEVSKRGRIIIACFANGRGFKKAFVASTVLAGMSTDEYMYMFAEPQSRGFYVDEINGGEHYSWDDTDGNFVTGLTPEQIRDAYGKVLYICDNMGLPTTITPEFANFSSQLISRMTEQPFNCVQDCSNSTYKVPATYAGQLFDAFYAYGVALNRSLTQDPTRANLKNGSFVLSDIGMSFQGVGGGTVTLDDTGTRIVQVYMFALNTSLLPYLAASLVINGSEVEYTPFYKSEADLWSVRPLARPICGFSGLECPPDFVKEYLVYTIIAAVIVVLALLAGCAGLLYTMQMKRKEMERQDLLWQVPFIELQQVQSKSKAEASMHSFASGPSTSTKITVESRSETINFIFYYYQQDILAAMKHDLILQFDAEQKAEFRQMRNFDNDNLNKFIGLCLDGPQLFSLWRFCSRGSLSDVISKSSMQMDSFFMFSLIRDISNGLLFIHNSFLKCHGHLTSRCCLIDDRWQIKISGYGLKSVRTFENPKKEDLLWTPPENLRNENEERLPEGDIYSFGIICSEILTRSSAFDLENRKEKPDVIIYQVKKGGHNPMRPSLDTGETVEINPALLHLIRDCWTERPSERPSIEQVRGHLNGMRDGRKSNLMDHVFNMLETYASTLEEEVSDRTKELVEEKKKSDVLLYRMLPKMVADKLKLGQTVEPETFEQVTIFFSDVVQFTTLAGKCTPLQVVTLLNDLYTIFDGIIEQNDVYKVETIGDGYLCVSGLPHRNGNEHIRHIARMSLGFLSSLEFFRVQHLPSERINLRIGINCGSVVAGVVGLTMPRYCLFGDAVNTASRMESNGKPGKIHVTAEANQMLTQVVGGFRTESRGEVIIKGKGVMETYWLLGEQSRISVSAQAPREKTPEPPRRQSVRSISPIIEKMSEETQKGLYSAYKDFNNGNECVS.

An N-terminal signal peptide occupies residues 1 to 14; the sequence is MCLFLLLFPYLASG. Topologically, residues 15–473 are extracellular; the sequence is QFLQTVKVGL…ECPPDFVKEY (459 aa). Residues N65, N130, N318, N340, N365, and N379 are each glycosylated (N-linked (GlcNAc...) asparagine). A helical membrane pass occupies residues 474 to 494; it reads LVYTIIAAVIVVLALLAGCAG. In terms of domain architecture, Protein kinase spans 482 to 817; sequence VIVVLALLAG…KSNLMDHVFN (336 aa). ATP contacts are provided by residues 488–496 and K545; that span reads LLAGCAGLL. The Cytoplasmic portion of the chain corresponds to 495-1111; sequence LLYTMQMKRK…DFNNGNECVS (617 aa). A Guanylate cyclase domain is found at 875–1005; the sequence is TIFFSDVVQF…DAVNTASRME (131 aa). Residues 1061–1082 are disordered; sequence SAQAPREKTPEPPRRQSVRSIS. The span at 1065–1074 shows a compositional bias: basic and acidic residues; the sequence is PREKTPEPPR.

Belongs to the adenylyl cyclase class-4/guanylyl cyclase family. Homodimer. In terms of tissue distribution, expressed asymmetrically in ASEL sensory neuron.

It is found in the cell membrane. The protein resides in the cell projection. Its subcellular location is the cilium. It carries out the reaction GTP = 3',5'-cyclic GMP + diphosphate. Guanylate cyclase involved in the production of the second messenger cGMP. Regulates chemotaxis responses toward Na(1+) and Li(1+) salt ions and alkaline pH in ASE left (ASEL) sensory neuron. Directly senses environmental alkalinity in ASEL neuron which probably leads to the activation of cGMP-gated cation channel tax2/tax4. This is Receptor-type guanylate cyclase gcy-14 from Caenorhabditis elegans.